Here is a 394-residue protein sequence, read N- to C-terminus: Argininosuccinate synthase (394 aa).

ATP is bound by residues 7–15 (AYSGGLDTS) and alanine 35. Tyrosine 85 lines the L-citrulline pocket. Residue glycine 115 coordinates ATP. L-aspartate-binding residues include threonine 117, asparagine 121, and aspartate 122. Asparagine 121 is an L-citrulline binding site. 5 residues coordinate L-citrulline: arginine 125, serine 174, serine 183, glutamate 258, and tyrosine 270.

The protein belongs to the argininosuccinate synthase family. Type 1 subfamily. In terms of assembly, homotetramer.

Its subcellular location is the cytoplasm. It catalyses the reaction L-citrulline + L-aspartate + ATP = 2-(N(omega)-L-arginino)succinate + AMP + diphosphate + H(+). The protein operates within amino-acid biosynthesis; L-arginine biosynthesis; L-arginine from L-ornithine and carbamoyl phosphate: step 2/3. In Methanopyrus kandleri (strain AV19 / DSM 6324 / JCM 9639 / NBRC 100938), this protein is Argininosuccinate synthase.